We begin with the raw amino-acid sequence, 267 residues long: NLP effector protein 6 (267 aa).

The signal sequence occupies residues M1–A35. Residue N114 is glycosylated (N-linked (GlcNAc...) asparagine). The Conserved undecapeptide motif motif lies at A117–R127. Positions I134 to K140 match the Conserved heptapeptide motif motif. N192 carries an N-linked (GlcNAc...) asparagine glycan.

This sequence belongs to the Necrosis inducing protein (NPP1) family.

It localises to the secreted. Probable secreted effector that may act as a pathogen-associated molecular pattern (PAMP) recognized by the plant immune system. This Plasmopara viticola (Downy mildew of grapevine) protein is NLP effector protein 6.